Here is a 198-residue protein sequence, read N- to C-terminus: Heat shock 70 kDa protein (198 aa).

Positions 170–191 are enriched in gly residues; sequence GGGVPSGMPGGMPGAGGGGGKG. Positions 170–198 are disordered; the sequence is GGGVPSGMPGGMPGAGGGGGKGPTIEEVD.

Belongs to the heat shock protein 70 family.

The sequence is that of Heat shock 70 kDa protein from Schistosoma japonicum (Blood fluke).